Reading from the N-terminus, the 2547-residue chain is Lovastatin diketide synthase mokB (2547 aa).

The 421-residue stretch at 10 to 430 (PTPIAVVGMG…GANAHAIVER (421 aa)) folds into the Ketosynthase family 3 (KS3) domain. Catalysis depends on for beta-ketoacyl synthase activity residues Cys183, His318, and His353. Residues 545–890 (VFTGQGAQWF…MDLLQGGYPV (346 aa)) are acyl and malonyl transferase. Ser635 functions as the For malonyltransferase activity in the catalytic mechanism. An N-terminal hotdog fold region spans residues 941–1079 (HDLIGVQEPL…GLIRAQVDHP (139 aa)). Residues 941-1252 (HDLIGVQEPL…FQSLGAVISD (312 aa)) form the PKS/mFAS DH domain. His973 serves as the catalytic Proton acceptor; for dehydratase activity. Positions 973–985 (HVVGSRILFPGAG) are dehydratase-like. The C-terminal hotdog fold stretch occupies residues 1095-1252 (SRKMAPQDLW…FQSLGAVISD (158 aa)). Residue Asp1160 is the Proton donor; for dehydratase activity of the active site. A disulfide bridge connects residues Cys1340 and Cys1379. Residues 1510–1547 (YDVVLACQVLHATSNMQRTLNNVRKLLKPGGKLILVET) are methyltransferase. One can recognise a Carrier domain in the interval 2459–2541 (ASTEEEATAL…EVAEVVVKKY (83 aa)). An O-(pantetheine 4'-phosphoryl)serine modification is found at Ser2501.

Pantetheine 4'-phosphate serves as cofactor.

The enzyme catalyses holo-[2-methylbutanoate polyketide synthase] + 2 malonyl-CoA + S-adenosyl-L-methionine + 2 NADPH + 3 H(+) = (S)-2-methylbutanoyl-[2-methylbutanoate polyketide synthase] + S-adenosyl-L-homocysteine + 2 CO2 + 2 NADP(+) + 2 CoA + H2O. The protein operates within polyketide biosynthesis; lovastatin biosynthesis. Functionally, diketide synthase; part of the gene cluster that mediates the biosynthesis of monakolin K, also known as lovastatin, and which acts as a potent competitive inhibitor of HMG-CoA reductase. Monakolin K biosynthesis is performed in two stages. The first stage is catalyzed by the nonaketide synthase mokA, which belongs to type I polyketide synthases and catalyzes the iterative nine-step formation of the polyketide. This PKS stage completed by the action of dehydrogenase mokE, which catalyzes the NADPH-dependent reduction of the unsaturated tetra-, penta- and heptaketide intermediates that arise during the mokA-mediated biosynthesis of the nonaketide chain and leads to dihydromonacolin L. Covalently bound dihydromonacolin L is released from mokA by the mokD esterase. Conversion of dihydromonacolin L into monacolin L and then monacolin J is subsequently performed with the participation of molecular oxygen and P450 monoogygenase mokC. Finally, mokF performs the conversion of monacoline J to monacoline K through the addition of the side-chain diketide moiety (2R)-2-methylbutanoate produced by the diketide synthase mokB. The polypeptide is Lovastatin diketide synthase mokB (Monascus pilosus (Red mold)).